Consider the following 149-residue polypeptide: L-alanine exporter AlaE (149 aa).

Transmembrane regions (helical) follow at residues 17–37 (FAMV…ISGM), 43–63 (LASR…YGVF), 86–106 (LTAY…TVGA), and 111–131 (IITA…FYGY).

It belongs to the AlaE exporter family.

It is found in the cell inner membrane. Its function is as follows. Exports L-alanine. This is L-alanine exporter AlaE from Aliivibrio salmonicida (strain LFI1238) (Vibrio salmonicida (strain LFI1238)).